A 496-amino-acid chain; its full sequence is Putative (R)-citramalate synthase CimA (496 aa).

In terms of domain architecture, Pyruvate carboxyltransferase spans 3 to 253 (VRVLDTTLRD…DTSINIEMLY (251 aa)).

It belongs to the alpha-IPM synthase/homocitrate synthase family. In terms of assembly, homodimer.

The enzyme catalyses pyruvate + acetyl-CoA + H2O = (3R)-citramalate + CoA + H(+). The protein operates within amino-acid biosynthesis; L-isoleucine biosynthesis; 2-oxobutanoate from pyruvate: step 1/3. Catalyzes the condensation of pyruvate and acetyl-coenzyme A to form (R)-citramalate. The chain is Putative (R)-citramalate synthase CimA from Methanothermobacter thermautotrophicus (strain ATCC 29096 / DSM 1053 / JCM 10044 / NBRC 100330 / Delta H) (Methanobacterium thermoautotrophicum).